A 434-amino-acid polypeptide reads, in one-letter code: MSILKIHAREIFDSRGNPTVEVDLFTSKGLFRAAVPSGASTGIYEALELRDNDKTRYMGKGVSKAVEHINKTIAPALVSKKLNVTEQEKIDKLMIEMDGTENKSKFGANAILGVSLAVCKAGAVEKGVPLYRHIADLAGNSEVILPVPAFNVINGGSHAGNKLAMQEFMILPVGAANFREAMRIGAEVYHNLKNVIKEKYGKDATNVGDEGGFAPNILENKEGLELLKTAIGKAGYTDKVVIGMDVAASEFFRSGKYDLDFKSPDDPSRYISPDQLADLYKSFIKDYPVVSIEDPFDQDDWGAWQKFTASAGIQVVGDDLTVTNPKRIAKAVNEKSCNCLLLKVNRIGSVTESLQACKLAQANGWGVMVSHRSGETEDTFIADLVVGLCTGQIKTGAPCRSERLAKYNQLLRIEEELGSKAKFAGRNFRNPLAK.

Residue serine 2 is modified to N-acetylserine. Residue lysine 5 is modified to N6-acetyllysine. At serine 27 the chain carries Phosphoserine. Residue serine 40 participates in Mg(2+) binding. Tyrosine 44 is modified (phosphotyrosine). Lysine 60 is subject to N6-acetyllysine; alternate. Lysine 60 is modified (N6-succinyllysine; alternate). N6-acetyllysine occurs at positions 64 and 71. Position 89 is an N6-acetyllysine; alternate (lysine 89). Position 89 is an N6-succinyllysine; alternate (lysine 89). N6-acetyllysine is present on residues lysine 92 and lysine 126. Substrate-binding residues include histidine 158 and glutamate 167. N6-acetyllysine is present on residues lysine 193 and lysine 199. Lysine 202 is modified (N6-acetyllysine; alternate). A Glycyl lysine isopeptide (Lys-Gly) (interchain with G-Cter in SUMO2); alternate cross-link involves residue lysine 202. Glutamate 210 functions as the Proton donor in the catalytic mechanism. Lysine 228 and lysine 233 each carry N6-acetyllysine; alternate. Position 228 is an N6-succinyllysine; alternate (lysine 228). At lysine 228 the chain carries N6-(2-hydroxyisobutyryl)lysine; alternate. Residue lysine 233 is modified to N6-malonyllysine; alternate. Residue aspartate 245 participates in Mg(2+) binding. At serine 254 the chain carries Phosphoserine. Lysine 256 is modified (N6-acetyllysine). Residues serine 263 and serine 272 each carry the phosphoserine modification. Residue lysine 281 is modified to N6-acetyllysine; alternate. At lysine 281 the chain carries N6-(2-hydroxyisobutyryl)lysine; alternate. Position 285 is an N6-acetyllysine (lysine 285). Tyrosine 287 bears the Phosphotyrosine mark. A Phosphoserine modification is found at serine 291. Residues glutamate 293 and aspartate 318 each contribute to the Mg(2+) site. 2 residues coordinate substrate: glutamate 293 and aspartate 318. Lysine 335 and lysine 343 each carry N6-acetyllysine. The active-site Proton acceptor is the lysine 343. Residues 370–373 and lysine 394 contribute to the substrate site; that span reads SHRS. The interval 405–434 is required for interaction with PLG; that stretch reads AKYNQLLRIEEELGSKAKFAGRNFRNPLAK. An N6-acetyllysine modification is found at lysine 406. Lysine 420 is subject to N6-acetyllysine; alternate. At lysine 420 the chain carries N6-succinyllysine; alternate. N6-malonyllysine; alternate is present on lysine 420.

Belongs to the enolase family. In terms of assembly, mammalian enolase is composed of 3 isozyme subunits, alpha, beta and gamma, which can form homodimers or heterodimers which are cell-type and development-specific. ENO1 interacts with PLG in the neuronal plasma membrane and promotes its activation. The C-terminal lysine is required for this binding. Interacts with ENO4 and PGAM2. Interacts with CMTM6. Requires Mg(2+) as cofactor. Post-translationally, ISGylated. In terms of processing, lysine 2-hydroxyisobutyrylation (Khib) by p300/EP300 activates the phosphopyruvate hydratase activity.

Its subcellular location is the cytoplasm. The protein localises to the cell membrane. The enzyme catalyses (2R)-2-phosphoglycerate = phosphoenolpyruvate + H2O. It functions in the pathway carbohydrate degradation; glycolysis; pyruvate from D-glyceraldehyde 3-phosphate: step 4/5. Functionally, glycolytic enzyme the catalyzes the conversion of 2-phosphoglycerate to phosphoenolpyruvate. In addition to glycolysis, involved in various processes such as growth control, hypoxia tolerance and allergic responses. May also function in the intravascular and pericellular fibrinolytic system due to its ability to serve as a receptor and activator of plasminogen on the cell surface of several cell-types such as leukocytes and neurons. Stimulates immunoglobulin production. In Pongo abelii (Sumatran orangutan), this protein is Alpha-enolase (ENO1).